A 141-amino-acid polypeptide reads, in one-letter code: Nucleoside diphosphate kinase (141 aa).

ATP contacts are provided by lysine 11, phenylalanine 59, arginine 87, threonine 93, arginine 104, and asparagine 114. The active-site Pros-phosphohistidine intermediate is histidine 117.

The protein belongs to the NDK family. In terms of assembly, homotetramer. Requires Mg(2+) as cofactor.

The protein localises to the cytoplasm. It carries out the reaction a 2'-deoxyribonucleoside 5'-diphosphate + ATP = a 2'-deoxyribonucleoside 5'-triphosphate + ADP. It catalyses the reaction a ribonucleoside 5'-diphosphate + ATP = a ribonucleoside 5'-triphosphate + ADP. In terms of biological role, major role in the synthesis of nucleoside triphosphates other than ATP. The ATP gamma phosphate is transferred to the NDP beta phosphate via a ping-pong mechanism, using a phosphorylated active-site intermediate. This chain is Nucleoside diphosphate kinase, found in Ralstonia nicotianae (strain ATCC BAA-1114 / GMI1000) (Ralstonia solanacearum).